A 229-amino-acid chain; its full sequence is Peptidase E (229 aa).

Residues Ser120, Asp135, and His157 each act as charge relay system in the active site.

Belongs to the peptidase S51 family.

Its subcellular location is the cytoplasm. It catalyses the reaction Dipeptidase E catalyzes the hydrolysis of dipeptides Asp-|-Xaa. It does not act on peptides with N-terminal Glu, Asn or Gln, nor does it cleave isoaspartyl peptides.. In terms of biological role, hydrolyzes dipeptides containing N-terminal aspartate residues. May play a role in allowing the cell to use peptide aspartate to spare carbon otherwise required for the synthesis of the aspartate family of amino acids. The protein is Peptidase E of Citrobacter koseri (strain ATCC BAA-895 / CDC 4225-83 / SGSC4696).